Reading from the N-terminus, the 305-residue chain is Chromatin modification-related protein png2 (305 aa).

Residues 135–239 (TVTPQTSERR…PLVKHDTLDS (105 aa)) are disordered. Positions 153-167 (NQHSQQYSSQERSSS) are enriched in low complexity. 2 stretches are compositionally biased toward polar residues: residues 168–183 (YNNF…SYHT) and 195–210 (KSSS…APQS). Tyrosine 181 carries the phosphotyrosine modification. Threonine 183 is modified (phosphothreonine). Serine 197 and serine 198 each carry phosphoserine. Basic and acidic residues predominate over residues 211-223 (TERRPVRRSESRL). A PHD-type zinc finger spans residues 248 to 297 (QLYCYCQQVSYGQMIGCDNENCKREWFHLPCVGLVEPPKGIWYCKECEEL). The Zn(2+) site is built by cysteine 251, cysteine 253, cysteine 264, cysteine 269, histidine 275, cysteine 278, cysteine 291, and cysteine 294.

The protein belongs to the ING family. In terms of assembly, interacts with H3K4me3 and to a lesser extent with H3K4me2. Component of the clr6 histone deacetylase complex I'composed of at least clr6, png2, prw1, pst1 and sds3.

The protein localises to the cytoplasm. The protein resides in the nucleus. In terms of biological role, component of the clr6 histone deacetylase complex I' responsible for the deacetylation of lysine residues on the N-terminal part of the core histones (H2A, H2B, H3 and H4). Histone deacetylation gives a tag for epigenetic repression and plays an important role in transcriptional regulation, cell cycle progression and developmental events. Has a role in silencing of mating type genes. The sequence is that of Chromatin modification-related protein png2 (png2) from Schizosaccharomyces pombe (strain 972 / ATCC 24843) (Fission yeast).